A 928-amino-acid polypeptide reads, in one-letter code: RhoGEF domain-containing protein gxcH (928 aa).

Positions 30-48 are enriched in low complexity; the sequence is SKSFDNNNNNNSNTNNIKN. Disordered regions lie at residues 30–76, 90–201, and 318–410; these read SKSF…PPVP, ITNY…PPLG, and DNGV…NKDT. Positions 93 to 103 are enriched in polar residues; it reads YIPTTPPSINI. Acidic residues predominate over residues 112–123; sequence DNYDDNYDDNYS. 3 stretches are compositionally biased toward polar residues: residues 129 to 141, 175 to 187, and 334 to 367; these read TSTTPPQFNSPEF, ETFNDQNNNEGLQ, and KSGTTLDSEPNLKSVSSSNRGSFVISKSSYNLRG. A compositionally biased stretch (low complexity) spans 377 to 407; sequence NQTTNKNNSNNNNNNTTTNNNNNNNNNNNNN. The DH domain occupies 484–671; that stretch reads IFNKVVKEII…GKIVSDINGK (188 aa). Residues 699 to 807 form a PH-like region; that stretch reads FIGEGKVKKV…NKIEDQIVSE (109 aa). Positions 835–928 are disordered; that stretch reads SDSQSDFVDH…NTEPENFSFY (94 aa). Positions 848-857 are enriched in low complexity; that stretch reads QEQQEQQQQQ.

Its function is as follows. GTPase-activating protein. This Dictyostelium discoideum (Social amoeba) protein is RhoGEF domain-containing protein gxcH (gxcH).